Reading from the N-terminus, the 145-residue chain is AN1-type zinc finger protein 2A (145 aa).

AN1-type zinc fingers lie at residues 4-52 (PDLG…QKDV) and 94-142 (KIFT…RPTI). Zn(2+) contacts are provided by Cys-10, Cys-15, Cys-25, Cys-28, Cys-33, His-36, His-42, Cys-44, Cys-100, Cys-105, Cys-115, Cys-118, Cys-123, His-126, His-132, and Cys-134.

Its subcellular location is the cytoplasm. It is found in the nucleus. In Homo sapiens (Human), this protein is AN1-type zinc finger protein 2A (ZFAND2A).